Here is an 890-residue protein sequence, read N- to C-terminus: Kinesin-like protein KIN-7C, mitochondrial (890 aa).

The segment covering 1-13 (MSATRSQRSSTIS) has biased composition (polar residues). A disordered region spans residues 1-66 (MSATRSQRSS…TSSAAASSTA (66 aa)). Residues 1 to 73 (MSATRSQRSS…STAVASTKLK (73 aa)) constitute a mitochondrion transit peptide. Residues 40–66 (SPVTSSSPLLRSSPSPSTSSAAASSTA) are compositionally biased toward low complexity. One can recognise a Kinesin motor domain in the interval 75 to 394 (NITVTIRFRP…LKFAQRCKHV (320 aa)). Residue 155–162 (GVTSSGKT) participates in ATP binding. Residues 395–468 (EIKASRNKIM…MGRIQRLTKL (74 aa)) are a coiled coil. The interval 511-595 (DGAVSTVSEH…TTRRENAAAI (85 aa)) is disordered. The segment covering 569–579 (SQASGSPSSSS) has biased composition (low complexity). Coiled coils occupy residues 664–693 (HIRDQIQKLEDEISEKKDQIRVLEQQIIEI) and 729–765 (ADNRILQEQLQMTKSENAEMQETIILLRQQLDSLAER). Residues 768–797 (TQQIAGDESSGKNIHNRNGEESEIYSGAGT) are disordered. The stretch at 818-884 (NETALNSQAL…AEEVTRLCNE (67 aa)) forms a coiled coil.

It belongs to the TRAFAC class myosin-kinesin ATPase superfamily. Kinesin family. KIN-7 subfamily.

The protein resides in the mitochondrion. The protein is Kinesin-like protein KIN-7C, mitochondrial of Arabidopsis thaliana (Mouse-ear cress).